Reading from the N-terminus, the 463-residue chain is Major capsid protein (463 aa).

Belongs to the NCLDV major capsid protein family. In terms of assembly, homotrimer.

The protein localises to the virion. In terms of biological role, major capsid protein that self assembles to form an icosahedral capsid. Represents around 50% of the total virion protein mass. This is Major capsid protein (MCP) from Rana tigrina ranavirus.